The chain runs to 711 residues: Retrovirus-related Pol polyprotein from type-1 retrotransposable element R2 (711 aa).

A Reverse transcriptase domain is found at 45–323; it reads LHLLRGHVPT…QTFRYLGHFF (279 aa). The nucleic acid-binding endonuclease stretch occupies residues 444–711; it reads LFSCPSFDHL…RAVWSRQAGA (268 aa).

The enzyme catalyses DNA(n) + a 2'-deoxyribonucleoside 5'-triphosphate = DNA(n+1) + diphosphate. In Popillia japonica (Japanese beetle), this protein is Retrovirus-related Pol polyprotein from type-1 retrotransposable element R2.